Here is a 294-residue protein sequence, read N- to C-terminus: UDP-3-O-acyl-N-acetylglucosamine deacetylase (294 aa).

Zn(2+) contacts are provided by His75, His232, and Asp236. Residue His259 is the Proton donor of the active site.

Belongs to the LpxC family. It depends on Zn(2+) as a cofactor.

The catalysed reaction is a UDP-3-O-[(3R)-3-hydroxyacyl]-N-acetyl-alpha-D-glucosamine + H2O = a UDP-3-O-[(3R)-3-hydroxyacyl]-alpha-D-glucosamine + acetate. The protein operates within glycolipid biosynthesis; lipid IV(A) biosynthesis; lipid IV(A) from (3R)-3-hydroxytetradecanoyl-[acyl-carrier-protein] and UDP-N-acetyl-alpha-D-glucosamine: step 2/6. In terms of biological role, catalyzes the hydrolysis of UDP-3-O-myristoyl-N-acetylglucosamine to form UDP-3-O-myristoylglucosamine and acetate, the committed step in lipid A biosynthesis. This is UDP-3-O-acyl-N-acetylglucosamine deacetylase from Campylobacter jejuni subsp. jejuni serotype O:6 (strain 81116 / NCTC 11828).